A 130-amino-acid polypeptide reads, in one-letter code: MAKLSTDDLLDAFKEMTLLELSEFVKQFEETFDVTAAAPVAVAAAGPAAGGAAAEAAEEQSEFDVVLESAGEKKIGVIKVVREIVSGLGLKEAKDLVDSAPKPLLEKVNKEAAEDAKGKLEAAGATVTVK.

The protein belongs to the bacterial ribosomal protein bL12 family. As to quaternary structure, homodimer. Part of the ribosomal stalk of the 50S ribosomal subunit. Forms a multimeric L10(L12)X complex, where L10 forms an elongated spine to which 2 to 4 L12 dimers bind in a sequential fashion. Binds GTP-bound translation factors.

Forms part of the ribosomal stalk which helps the ribosome interact with GTP-bound translation factors. Is thus essential for accurate translation. The chain is Large ribosomal subunit protein bL12 from Mycolicibacterium vanbaalenii (strain DSM 7251 / JCM 13017 / BCRC 16820 / KCTC 9966 / NRRL B-24157 / PYR-1) (Mycobacterium vanbaalenii).